The primary structure comprises 828 residues: Protein ELFN1 (828 aa).

The N-terminal stretch at 1–25 (MAGHGWGTAWVLVAAATLLHAGGLA) is a signal peptide. The Extracellular portion of the chain corresponds to 26-418 (QGDCWLIEGD…VPSPSTATHY (393 aa)). LRR repeat units lie at residues 61–82 (TIVDLRLNENRIRSVQYASLSR), 85–106 (NLTYLNLTKNEIGYIEDGAFSG), 109–130 (NLQVLQLGYNRLRNLTEGMLRG), 133–154 (KLEYLYLQANLIEVVMASAFWE), and 157–178 (NIVNIDLSMNRIQQLGSGTFAG). 3 N-linked (GlcNAc...) asparagine glycosylation sites follow: Asn85, Asn90, and Asn122. Positions 190-253 (NPFYCSCELL…LSKLQSVCTE (64 aa)) constitute an LRRCT domain. Asn210 is a glycosylation site (N-linked (GlcNAc...) asparagine). A disordered region spans residues 258–293 (AEVLGPPRPVPGRSQPGHSPPPPPPEPSDMPCADDE). A compositionally biased stretch (pro residues) spans 275-285 (HSPPPPPPEPS). The 88-residue stretch at 312–399 (QTEARPSMKV…HNHTCLTICL (88 aa)) folds into the Fibronectin type-III domain. The N-linked (GlcNAc...) asparagine glycan is linked to Asn376. The chain crosses the membrane as a helical span at residues 419-439 (IMTILGCLFGMVLVLGAVYYC). The Cytoplasmic portion of the chain corresponds to 440–828 (LRKRRRQEEK…WKGVSAQHKS (389 aa)). Ser460 and Ser646 each carry phosphoserine. Disordered stretches follow at residues 627–674 (HHSV…IEKS) and 697–731 (KSRQYGEHRHSYPGSHPAEPPAPPPPPPTHEGLGG). Positions 638 to 652 (RASTSSSGSARSPRT) are enriched in low complexity. Residues 697–706 (KSRQYGEHRH) show a composition bias toward basic and acidic residues. Positions 714-725 (AEPPAPPPPPPT) are enriched in pro residues.

As to quaternary structure, interacts with PPP1CA. Selectively expressed in perialvear somatostatin (Sst)-containing interneurons.

It is found in the membrane. The protein resides in the cell projection. It localises to the dendrite. Functionally, postsynaptic protein that regulates circuit dynamics in the central nervous system by modulating the temporal dynamics of interneuron recruitment. Specifically present in excitatory synapses onto oriens-lacunosum molecular (OLM) interneurons and acts as a regulator of presynaptic release probability to direct the formation of highly facilitating pyramidal-OLM synapses. Inhibits phosphatase activity of protein phosphatase 1 (PP1) complexes. In Mus musculus (Mouse), this protein is Protein ELFN1 (Elfn1).